Reading from the N-terminus, the 500-residue chain is Chromosomal replication initiator protein DnaA (500 aa).

Positions M1–E81 are domain I, interacts with DnaA modulators. A domain II region spans residues E81–T155. The domain III, AAA+ region stretch occupies residues H156 to A377. 4 residues coordinate ATP: G200, G202, K203, and T204. Residues S378–N500 are domain IV, binds dsDNA.

Belongs to the DnaA family. As to quaternary structure, oligomerizes as a right-handed, spiral filament on DNA at oriC.

Its subcellular location is the cytoplasm. Its function is as follows. Plays an essential role in the initiation and regulation of chromosomal replication. ATP-DnaA binds to the origin of replication (oriC) to initiate formation of the DNA replication initiation complex once per cell cycle. Binds the DnaA box (a 9 base pair repeat at the origin) and separates the double-stranded (ds)DNA. Forms a right-handed helical filament on oriC DNA; dsDNA binds to the exterior of the filament while single-stranded (ss)DNA is stabiized in the filament's interior. The ATP-DnaA-oriC complex binds and stabilizes one strand of the AT-rich DNA unwinding element (DUE), permitting loading of DNA polymerase. After initiation quickly degrades to an ADP-DnaA complex that is not apt for DNA replication. Binds acidic phospholipids. This Bifidobacterium longum subsp. infantis (strain ATCC 15697 / DSM 20088 / JCM 1222 / NCTC 11817 / S12) protein is Chromosomal replication initiator protein DnaA.